A 97-amino-acid polypeptide reads, in one-letter code: MKRICSIYQSSKKSGMYLYVLKSDALERVPEGLMAAFGKAKHSFDLVLTPERKLASEDIAVVLENLEKQGYHLQMPPAEEEYIEHLPEELLRRNDPV.

The 85-residue stretch at 3-87 (RICSIYQSSK…AEEEYIEHLP (85 aa)) folds into the YcgL domain.

The sequence is that of YcgL domain-containing protein Pfl01_1389 from Pseudomonas fluorescens (strain Pf0-1).